A 225-amino-acid polypeptide reads, in one-letter code: NAD(P)H-quinone oxidoreductase subunit K, chloroplastic (225 aa).

Residues Cys-43, Cys-44, Cys-108, and Cys-139 each contribute to the [4Fe-4S] cluster site.

The protein belongs to the complex I 20 kDa subunit family. NDH is composed of at least 16 different subunits, 5 of which are encoded in the nucleus. Requires [4Fe-4S] cluster as cofactor.

The protein resides in the plastid. It is found in the chloroplast thylakoid membrane. It carries out the reaction a plastoquinone + NADH + (n+1) H(+)(in) = a plastoquinol + NAD(+) + n H(+)(out). The catalysed reaction is a plastoquinone + NADPH + (n+1) H(+)(in) = a plastoquinol + NADP(+) + n H(+)(out). In terms of biological role, NDH shuttles electrons from NAD(P)H:plastoquinone, via FMN and iron-sulfur (Fe-S) centers, to quinones in the photosynthetic chain and possibly in a chloroplast respiratory chain. The immediate electron acceptor for the enzyme in this species is believed to be plastoquinone. Couples the redox reaction to proton translocation, and thus conserves the redox energy in a proton gradient. This chain is NAD(P)H-quinone oxidoreductase subunit K, chloroplastic, found in Lemna minor (Common duckweed).